Reading from the N-terminus, the 358-residue chain is Peptide chain release factor 1 (358 aa).

Residue glutamine 235 is modified to N5-methylglutamine.

It belongs to the prokaryotic/mitochondrial release factor family. Methylated by PrmC. Methylation increases the termination efficiency of RF1.

The protein resides in the cytoplasm. In terms of biological role, peptide chain release factor 1 directs the termination of translation in response to the peptide chain termination codons UAG and UAA. The chain is Peptide chain release factor 1 from Neisseria gonorrhoeae (strain NCCP11945).